A 360-amino-acid chain; its full sequence is tRNA-specific 2-thiouridylase MnmA (360 aa).

ATP contacts are provided by residues 9-16 (AMSGGVDS) and L35. C104 functions as the Nucleophile in the catalytic mechanism. An intrachain disulfide couples C104 to C197. Residue G128 coordinates ATP. The segment at 147 to 149 (KDQ) is interaction with tRNA. The Cysteine persulfide intermediate role is filled by C197.

The protein belongs to the MnmA/TRMU family.

It localises to the cytoplasm. The catalysed reaction is S-sulfanyl-L-cysteinyl-[protein] + uridine(34) in tRNA + AH2 + ATP = 2-thiouridine(34) in tRNA + L-cysteinyl-[protein] + A + AMP + diphosphate + H(+). Catalyzes the 2-thiolation of uridine at the wobble position (U34) of tRNA, leading to the formation of s(2)U34. The sequence is that of tRNA-specific 2-thiouridylase MnmA from Salinispora tropica (strain ATCC BAA-916 / DSM 44818 / JCM 13857 / NBRC 105044 / CNB-440).